Consider the following 185-residue polypeptide: Prenylated Rab acceptor protein 1 (185 aa).

Over 1 to 78 (MAAEKDQQKD…RNVEYYQSNY (78 aa)) the chain is Cytoplasmic. The tract at residues 30–54 (AGRERLERRRATIRPWSSFVDQRRF) is required for interaction with prenylated RAB3A and VAMP2. Helical transmembrane passes span 79 to 94 (VFVFLGLILYCVVTSP) and 95 to 112 (MLLVALAVFFGACYILYL). Residues 113-131 (RTLQSKFVLFGREVSPAHQ) lie on the Cytoplasmic side of the membrane. Transmembrane regions (helical) follow at residues 132–148 (YALAGGVSFPFFWLAGA) and 149–165 (GSAVFWVLGATLVVIGS). The segment at 165–185 (SHAAFHQMEAVDGEELQMEPV) is required for interaction with GDI1. Topologically, residues 166–185 (HAAFHQMEAVDGEELQMEPV) are cytoplasmic. Positions 175–185 (VDGEELQMEPV) are required for interaction with prenylated RAB3A and VAMP2. Residues 175 to 185 (VDGEELQMEPV) form a homodimerization region.

This sequence belongs to the PRA1 family. Homodimer. Interacts with VAMP2 (synaptobrevin-2), prenylated Rab proteins, GDI1, NDRG1 and PCLO.

The protein resides in the cell membrane. It is found in the cytoplasm. Its subcellular location is the golgi apparatus. It localises to the cytoplasmic vesicle. The protein localises to the secretory vesicle. The protein resides in the synaptic vesicle. Functionally, general Rab protein regulator required for vesicle formation from the Golgi complex. May control vesicle docking and fusion by mediating the action of Rab GTPases to the SNARE complexes. In addition it inhibits the removal of Rab GTPases from the membrane by GDI1. The polypeptide is Prenylated Rab acceptor protein 1 (RABAC1) (Canis lupus familiaris (Dog)).